The following is a 149-amino-acid chain: D-aminoacyl-tRNA deacylase (149 aa).

The Gly-cisPro motif, important for rejection of L-amino acids signature appears at 137–138; sequence GP.

The protein belongs to the DTD family. Homodimer.

Its subcellular location is the cytoplasm. The enzyme catalyses glycyl-tRNA(Ala) + H2O = tRNA(Ala) + glycine + H(+). The catalysed reaction is a D-aminoacyl-tRNA + H2O = a tRNA + a D-alpha-amino acid + H(+). Functionally, an aminoacyl-tRNA editing enzyme that deacylates mischarged D-aminoacyl-tRNAs. Also deacylates mischarged glycyl-tRNA(Ala), protecting cells against glycine mischarging by AlaRS. Acts via tRNA-based rather than protein-based catalysis; rejects L-amino acids rather than detecting D-amino acids in the active site. By recycling D-aminoacyl-tRNA to D-amino acids and free tRNA molecules, this enzyme counteracts the toxicity associated with the formation of D-aminoacyl-tRNA entities in vivo and helps enforce protein L-homochirality. This is D-aminoacyl-tRNA deacylase from Clostridium botulinum (strain Loch Maree / Type A3).